The chain runs to 630 residues: Probable potassium transport system protein Kup (630 aa).

12 helical membrane passes run 19–39 (GLIG…LYAV), 59–79 (LLSL…VLLI), 108–128 (WIIG…ATIT), 145–165 (PGLK…LFFV), 173–193 (VGGA…ALGL), 220–240 (LLAF…EALY), 255–275 (WLFF…ALVI), 284–304 (PFFF…ATIA), 345–365 (IYVP…VLGF), 374–394 (AYGI…AFVY), 405–425 (TVLV…SNVL), and 427–447 (VFDG…VMTT).

It belongs to the HAK/KUP transporter (TC 2.A.72) family.

It localises to the cell inner membrane. It carries out the reaction K(+)(in) + H(+)(in) = K(+)(out) + H(+)(out). Transport of potassium into the cell. Likely operates as a K(+):H(+) symporter. This Acidiphilium cryptum (strain JF-5) protein is Probable potassium transport system protein Kup.